A 60-amino-acid chain; its full sequence is Mastoparan-D (60 aa).

The N-terminal stretch at 1–27 (MKNTILILFTAFIALLGFFGMSAEALA) is a signal peptide. AXPX repeat units lie at residues 27-30 (ADPI), 31-34 (ADPV), 35-38 (AGPN), and 41-44 (ADPE). The propeptide occupies 28-45 (DPIADPVAGPNPEADPEA). Leucine 59 is modified (leucine amide).

Belongs to the MCD family. Mastoparan subfamily. Expressed by the venom gland.

Its subcellular location is the secreted. The protein localises to the target cell membrane. Functionally, antimicrobial and mast cell degranulating peptide. Has broad spectrum antibacterial activity against both Gram-positive and Gram-negative bacteria (S.aureus MIC=24-32 ug/ml, S.xylosus MIC=2 ug/ml, S.alactolyticus MIC=16 ug/ml, C.koseri MIC=4 ug/ml, E.coli MIC=8 ug/ml, K.pneumoniae MIC=32 ug/ml, P.aerugiosa MIC=128 ug/ml, S.choleraesuis MIC=16 ug/ml, S.typhimurium MIC=32 ug/ml, V.parahamelytics MIC=32 ug/ml). Affects membrane permeability of E.coli. Shows hemolytic activities on sheep, chicken and human erythrocytes. Its mast cell degranulation activity may be related to the activation of G-protein coupled receptors in mast cells as well as interaction with other proteins located in cell endosomal membranes in the mast cells. The sequence is that of Mastoparan-D from Vespa ducalis (Black-tailed hornet).